Reading from the N-terminus, the 430-residue chain is Long-chain specific acyl-CoA dehydrogenase, mitochondrial (430 aa).

A mitochondrion-targeting transit peptide spans 1–30 (MAARLLRGSLRVLGGHRAPRQLPAARCSHS). Position 42 is an N6-acetyllysine (Lys42). The residue at position 54 (Ser54) is a Phosphoserine. An N6-acetyllysine; alternate mark is found at Lys66 and Lys81. Residues Lys66 and Lys81 each carry the N6-succinyllysine; alternate modification. Lys92 and Lys95 each carry N6-acetyllysine. At Lys165 the chain carries N6-succinyllysine. Residues 170 to 179 (IAMTEPGAGS) and 203 to 205 (FIS) contribute to the FAD site. A substrate-binding site is contributed by Ser179. 227 to 228 (AH) contributes to the substrate binding site. Lys240 carries the N6-succinyllysine modification. Lys254 and Lys279 each carry N6-acetyllysine; alternate. Residues Lys254 and Lys279 each carry the N6-succinyllysine; alternate modification. Residues Tyr282 and 289-292 (PQER) contribute to the substrate site. Residue Glu291 is the Proton acceptor of the active site. Arg317 lines the FAD pocket. At Lys318 the chain carries N6-acetyllysine. Residue Lys322 is modified to N6-acetyllysine; alternate. An N6-succinyllysine; alternate modification is found at Lys322. Gln328 contacts FAD. Lys358 is modified (N6-acetyllysine). Ser362 carries the post-translational modification Phosphoserine. 385–389 (QLHGG) lines the FAD pocket. 412–413 (GG) contacts substrate. An FAD-binding site is contributed by 414-416 (TNE).

This sequence belongs to the acyl-CoA dehydrogenase family. As to quaternary structure, homotetramer. The cofactor is FAD. Acetylation at Lys-318 and Lys-322 in proximity of the cofactor-binding sites strongly reduces catalytic activity. These sites are deacetylated by SIRT3.

Its subcellular location is the mitochondrion matrix. It carries out the reaction a long-chain 2,3-saturated fatty acyl-CoA + oxidized [electron-transfer flavoprotein] + H(+) = a long-chain (2E)-enoyl-CoA + reduced [electron-transfer flavoprotein]. The catalysed reaction is hexanoyl-CoA + oxidized [electron-transfer flavoprotein] + H(+) = (2E)-hexenoyl-CoA + reduced [electron-transfer flavoprotein]. It catalyses the reaction octanoyl-CoA + oxidized [electron-transfer flavoprotein] + H(+) = (2E)-octenoyl-CoA + reduced [electron-transfer flavoprotein]. The enzyme catalyses decanoyl-CoA + oxidized [electron-transfer flavoprotein] + H(+) = (2E)-decenoyl-CoA + reduced [electron-transfer flavoprotein]. It carries out the reaction dodecanoyl-CoA + oxidized [electron-transfer flavoprotein] + H(+) = (2E)-dodecenoyl-CoA + reduced [electron-transfer flavoprotein]. The catalysed reaction is tetradecanoyl-CoA + oxidized [electron-transfer flavoprotein] + H(+) = (2E)-tetradecenoyl-CoA + reduced [electron-transfer flavoprotein]. It catalyses the reaction oxidized [electron-transfer flavoprotein] + hexadecanoyl-CoA + H(+) = (2E)-hexadecenoyl-CoA + reduced [electron-transfer flavoprotein]. The enzyme catalyses octadecanoyl-CoA + oxidized [electron-transfer flavoprotein] + H(+) = (2E)-octadecenoyl-CoA + reduced [electron-transfer flavoprotein]. It carries out the reaction eicosanoyl-CoA + oxidized [electron-transfer flavoprotein] + H(+) = (2E)-eicosenoyl-CoA + reduced [electron-transfer flavoprotein]. The catalysed reaction is docosanoyl-CoA + oxidized [electron-transfer flavoprotein] + H(+) = (2E)-docosenoyl-CoA + reduced [electron-transfer flavoprotein]. It catalyses the reaction tetracosanoyl-CoA + oxidized [electron-transfer flavoprotein] + H(+) = (2E)-tetracosenoyl-CoA + reduced [electron-transfer flavoprotein]. The enzyme catalyses (5E)-tetradecenoyl-CoA + oxidized [electron-transfer flavoprotein] + H(+) = (2E,5E)-tetradecadienoyl-CoA + reduced [electron-transfer flavoprotein]. It carries out the reaction (5Z)-tetradecenoyl-CoA + oxidized [electron-transfer flavoprotein] + H(+) = (2E,5Z)-tetradecadienoyl-CoA + reduced [electron-transfer flavoprotein]. The catalysed reaction is oxidized [electron-transfer flavoprotein] + (9Z)-octadecenoyl-CoA + H(+) = (2E,9Z)-octadecadienoyl-CoA + reduced [electron-transfer flavoprotein]. It functions in the pathway lipid metabolism; mitochondrial fatty acid beta-oxidation. Its function is as follows. Long-chain specific acyl-CoA dehydrogenase is one of the acyl-CoA dehydrogenases that catalyze the first step of mitochondrial fatty acid beta-oxidation, an aerobic process breaking down fatty acids into acetyl-CoA and allowing the production of energy from fats. The first step of fatty acid beta-oxidation consists in the removal of one hydrogen from C-2 and C-3 of the straight-chain fatty acyl-CoA thioester, resulting in the formation of trans-2-enoyl-CoA. Among the different mitochondrial acyl-CoA dehydrogenases, long-chain specific acyl-CoA dehydrogenase can act on saturated and unsaturated acyl-CoAs with 6 to 24 carbons with a preference for 8 to 18 carbons long primary chains. This is Long-chain specific acyl-CoA dehydrogenase, mitochondrial from Homo sapiens (Human).